Here is a 180-residue protein sequence, read N- to C-terminus: PLASMODESMATA CALLOSE-BINDING PROTEIN 5 (180 aa).

An N-terminal signal peptide occupies residues 1 to 29 (MIMSLPQCSHLRLSILAATAAMLMVITTA). A disulfide bridge links Cys-42 with Cys-105. Positions 126–151 (PSSKGANNGRLADDTSMGAGQADMSR) are disordered. Ser-157 is lipidated: GPI-anchor amidated serine. A propeptide spans 158–180 (SSWMVTFIGFGSLLTMTWIIHHL) (removed in mature form).

In terms of processing, contains two additional disulfide bonds.

Its subcellular location is the cell membrane. It is found in the cell junction. The protein resides in the plasmodesma. The sequence is that of PLASMODESMATA CALLOSE-BINDING PROTEIN 5 (PDCB5) from Arabidopsis thaliana (Mouse-ear cress).